Here is a 176-residue protein sequence, read N- to C-terminus: Ribosome rescue factor SmrB (176 aa).

The segment at 29 to 51 (TIIQQPKKNTKQKEIKRSNREAS) is disordered. A compositionally biased stretch (basic and acidic residues) spans 39 to 51 (KQKEIKRSNREAS). In terms of domain architecture, Smr spans 97 to 172 (LDMHGMTQQE…GDGALLVLLS (76 aa)).

It belongs to the SmrB family. Associates with collided ribosomes, but not with correctly translating polysomes.

Acts as a ribosome collision sensor. Detects stalled/collided disomes (pairs of ribosomes where the leading ribosome is stalled and a second ribosome has collided with it) and endonucleolytically cleaves mRNA at the 5' boundary of the stalled ribosome. Stalled/collided disomes form a new interface (primarily via the 30S subunits) that binds SmrB. Cleaved mRNA becomes available for tmRNA ligation, leading to ribosomal subunit dissociation and rescue of stalled ribosomes. The protein is Ribosome rescue factor SmrB of Vibrio parahaemolyticus serotype O3:K6 (strain RIMD 2210633).